A 323-amino-acid chain; its full sequence is Phospho-N-acetylmuramoyl-pentapeptide-transferase (323 aa).

A run of 9 helical transmembrane segments spans residues 3-23 (NILL…PALI), 52-72 (MGGL…SWVL), 77-97 (MLPT…LGMW), 121-141 (IVGA…MALH), 145-165 (IGNW…LVGF), 175-195 (LDGL…IVAW), 200-220 (INIA…LIFN), 226-248 (IFMG…ILLH), and 301-321 (IDLT…WVIL).

The protein belongs to the glycosyltransferase 4 family. MraY subfamily. It depends on Mg(2+) as a cofactor.

The protein resides in the cell membrane. The enzyme catalyses UDP-N-acetyl-alpha-D-muramoyl-L-alanyl-gamma-D-glutamyl-L-lysyl-D-alanyl-D-alanine + di-trans,octa-cis-undecaprenyl phosphate = Mur2Ac(oyl-L-Ala-gamma-D-Glu-L-Lys-D-Ala-D-Ala)-di-trans,octa-cis-undecaprenyl diphosphate + UMP. The protein operates within cell wall biogenesis; peptidoglycan biosynthesis. Functionally, catalyzes the initial step of the lipid cycle reactions in the biosynthesis of the cell wall peptidoglycan: transfers peptidoglycan precursor phospho-MurNAc-pentapeptide from UDP-MurNAc-pentapeptide onto the lipid carrier undecaprenyl phosphate, yielding undecaprenyl-pyrophosphoryl-MurNAc-pentapeptide, known as lipid I. The protein is Phospho-N-acetylmuramoyl-pentapeptide-transferase of Levilactobacillus brevis (strain ATCC 367 / BCRC 12310 / CIP 105137 / JCM 1170 / LMG 11437 / NCIMB 947 / NCTC 947) (Lactobacillus brevis).